A 176-amino-acid polypeptide reads, in one-letter code: 3-hydroxydecanoyl-[acyl-carrier-protein] dehydratase (176 aa).

The active site involves His-75.

This sequence belongs to the thioester dehydratase family. FabA subfamily. In terms of assembly, homodimer.

Its subcellular location is the cytoplasm. It carries out the reaction a (3R)-hydroxyacyl-[ACP] = a (2E)-enoyl-[ACP] + H2O. The enzyme catalyses (3R)-hydroxydecanoyl-[ACP] = (2E)-decenoyl-[ACP] + H2O. It catalyses the reaction (2E)-decenoyl-[ACP] = (3Z)-decenoyl-[ACP]. The protein operates within lipid metabolism; fatty acid biosynthesis. In terms of biological role, necessary for the introduction of cis unsaturation into fatty acids. Catalyzes the dehydration of (3R)-3-hydroxydecanoyl-ACP to E-(2)-decenoyl-ACP and then its isomerization to Z-(3)-decenoyl-ACP. Can catalyze the dehydratase reaction for beta-hydroxyacyl-ACPs with saturated chain lengths up to 16:0, being most active on intermediate chain length. The protein is 3-hydroxydecanoyl-[acyl-carrier-protein] dehydratase of Haemophilus ducreyi (strain 35000HP / ATCC 700724).